Here is a 215-residue protein sequence, read N- to C-terminus: LexA repressor (215 aa).

Residues 28 to 48 (RAEIAAELGFSSPNAAEEHLR) constitute a DNA-binding region (H-T-H motif). Catalysis depends on for autocatalytic cleavage activity residues Ser-133 and Lys-170.

This sequence belongs to the peptidase S24 family. Homodimer.

It carries out the reaction Hydrolysis of Ala-|-Gly bond in repressor LexA.. In terms of biological role, represses a number of genes involved in the response to DNA damage (SOS response), including recA and lexA. In the presence of single-stranded DNA, RecA interacts with LexA causing an autocatalytic cleavage which disrupts the DNA-binding part of LexA, leading to derepression of the SOS regulon and eventually DNA repair. The polypeptide is LexA repressor (Burkholderia vietnamiensis (strain G4 / LMG 22486) (Burkholderia cepacia (strain R1808))).